The following is a 359-amino-acid chain: MRYSDSYHTTGRWQPRASTEGFPMGVSIEVNGLTKSFGSSRIWEDVTLTIPAGEVSVLLGPSGTGKSVFLKSLIGLLRPERGSIIIDGTDIIECSAKELYEIRTLFGVLFQDGALFGSMNLYDNTAFPLREHTKKKESEIRDIVMEKLALVGLGGDEKKFPGEISGGMRKRAGLARALVLDPQIILCDEPDSGLDPVRTAYLSQLIMDINAQIDATILIVTHNINIARTVPDNMGMLFRKHLVMFGPREVLLTSDEPVVRQFLNGRRIGPIGMSEEKDEATMAEEQALLDAGHHAGGVEEIEGVPPQISATPGMPERKAVARRQARVREMLHTLPKKAQAAILDDLEGTHKYAVHEIGQ.

An ABC transporter domain is found at 28 to 264; the sequence is IEVNGLTKSF…DEPVVRQFLN (237 aa). ATP is bound at residue 60-67; that stretch reads GPSGTGKS.

This sequence belongs to the ABC transporter superfamily.

Not known, could be involved in the transport of ribonucleotides. This is Probable ribonucleotide transport ATP-binding protein mkl (mkl) from Mycobacterium bovis (strain ATCC BAA-935 / AF2122/97).